We begin with the raw amino-acid sequence, 690 residues long: Proprotein convertase subtilisin/kexin type 9 (690 aa).

The signal sequence occupies residues 1 to 28 (MGTVRSRRLWWPLPLLLLLLLGPAGARA). Positions 29–150 (QEDDDGDYEE…IEEDSYVFAQ (122 aa)) are excised as a propeptide. A Sulfotyrosine modification is found at Tyr36. Position 45 is a phosphoserine (Ser45). Positions 75–147 (TYVVVLKEET…VDYIEEDSYV (73 aa)) constitute an Inhibitor I9 domain. Positions 153–459 (PWNLERITPA…GWQLFCRTVW (307 aa)) constitute a Peptidase S8 domain. Active-site charge relay system residues include Asp184 and His224. 2 disulfides stabilise this stretch: Cys221–Cys253 and Cys321–Cys356. The active-site Charge relay system is the Ser384. A C-terminal domain region spans residues 448–690 (GAGWQLFCRT…HLAQASQELQ (243 aa)). 3 disulfides stabilise this stretch: Cys455/Cys525, Cys475/Cys524, and Cys484/Cys507. Asn531 carries an N-linked (GlcNAc...) asparagine glycan. 6 disulfide bridges follow: Cys532–Cys599, Cys550–Cys598, Cys560–Cys586, Cys606–Cys677, Cys624–Cys676, and Cys633–Cys652. Ser686 carries the post-translational modification Phosphoserine.

It belongs to the peptidase S8 family. In terms of assembly, monomer. Can self-associate to form dimers and higher multimers which may have increased LDLR degrading activity. The precursor protein but not the mature protein may form multimers. Interacts with APOB, VLDLR, LRP8/APOER2 and BACE1. The full-length immature form (pro-PCSK9) interacts with SCNN1A, SCNN1B and SCNN1G. The pro-PCSK9 form (via C-terminal domain) interacts with LDLR. Interacts (via the C-terminal domain) with ANXA2 (via repeat Annexin 1); the interaction inhibits the degradation of LDLR. Ca(2+) serves as cofactor. Post-translationally, cleavage by furin and PCSK5 generates a truncated inactive protein that is unable to induce LDLR degradation. In terms of processing, undergoes autocatalytic cleavage in the endoplasmic reticulum to release the propeptide from the N-terminus and the cleavage of the propeptide is strictly required for its maturation and activation. The cleaved propeptide however remains associated with the catalytic domain through non-covalent interactions, preventing potential substrates from accessing its active site. As a result, it is secreted from cells as a propeptide-containing, enzymatically inactive protein. Phosphorylation protects the propeptide against proteolysis.

The protein localises to the cytoplasm. It is found in the secreted. The protein resides in the endosome. It localises to the lysosome. Its subcellular location is the cell surface. The protein localises to the endoplasmic reticulum. It is found in the golgi apparatus. Its activity is regulated as follows. Its proteolytic activity is autoinhibited by the non-covalent binding of the propeptide to the catalytic domain. Inhibited by EGTA. Its function is as follows. Crucial player in the regulation of plasma cholesterol homeostasis. Binds to low-density lipid receptor family members: low density lipoprotein receptor (LDLR), very low density lipoprotein receptor (VLDLR), apolipoprotein E receptor (LRP1/APOER) and apolipoprotein receptor 2 (LRP8/APOER2), and promotes their degradation in intracellular acidic compartments. Acts via a non-proteolytic mechanism to enhance the degradation of the hepatic LDLR through a clathrin LDLRAP1/ARH-mediated pathway. May prevent the recycling of LDLR from endosomes to the cell surface or direct it to lysosomes for degradation. Can induce ubiquitination of LDLR leading to its subsequent degradation. Inhibits intracellular degradation of APOB via the autophagosome/lysosome pathway in a LDLR-independent manner. Involved in the disposal of non-acetylated intermediates of BACE1 in the early secretory pathway. Inhibits epithelial Na(+) channel (ENaC)-mediated Na(+) absorption by reducing ENaC surface expression primarily by increasing its proteasomal degradation. Regulates neuronal apoptosis via modulation of LRP8/APOER2 levels and related anti-apoptotic signaling pathways. The sequence is that of Proprotein convertase subtilisin/kexin type 9 (PCSK9) from Lagothrix lagotricha (Brown woolly monkey).